We begin with the raw amino-acid sequence, 2789 residues long: Multiple epidermal growth factor-like domains protein 8 (2789 aa).

Positions 1-27 (MALGGALALALALALAVLGPLSLRVLA) are cleaved as a signal peptide. Residues 28–2591 (GDCKGQRQVL…FFRQDQAHID (2564 aa)) are Extracellular-facing. Disulfide bonds link cysteine 30–cysteine 57, cysteine 142–cysteine 152, cysteine 146–cysteine 158, cysteine 174–cysteine 184, cysteine 178–cysteine 191, and cysteine 193–cysteine 202. The 111-residue stretch at 30-140 (CKGQRQVLRE…LGFNASFRFS (111 aa)) folds into the CUB 1 domain. An N-linked (GlcNAc...) asparagine glycan is attached at asparagine 50. EGF-like domains follow at residues 138-168 (RFSL…GGPD) and 170-203 (GLQE…RACD). Kelch repeat units follow at residues 241–287 (LLAV…AVAW), 290–338 (LLVL…AGHA), 346–399 (WLYV…FHAP), 402–453 (TLLV…FHTA), 459–511 (YMVV…APPS), and 525–575 (VLLV…SRDP). PSI domains are found at residues 561–613 (YCSM…SDCQ), 847–899 (ACTS…ALCP), and 900–947 (LCEE…EECP). An N-linked (GlcNAc...) asparagine glycan is attached at asparagine 1048. The EGF-like 3; calcium-binding domain occupies 1074–1115 (DVDECRLGLARCHPRATCLNTPLSYECHCQRGYQGDGITHCN). 16 disulfide bridges follow: cysteine 1078–cysteine 1091, cysteine 1085–cysteine 1100, cysteine 1102–cysteine 1114, cysteine 1163–cysteine 1171, cysteine 1165–cysteine 1179, cysteine 1182–cysteine 1191, cysteine 1194–cysteine 1208, cysteine 1211–cysteine 1224, cysteine 1213–cysteine 1231, cysteine 1233–cysteine 1242, cysteine 1245–cysteine 1259, cysteine 1263–cysteine 1302, cysteine 1336–cysteine 1367, cysteine 1407–cysteine 1421, cysteine 1415–cysteine 1433, and cysteine 1435–cysteine 1444. Laminin EGF-like domains follow at residues 1163–1210 (CGCS…GCRP) and 1211–1261 (CQCN…SCFR). The N-linked (GlcNAc...) asparagine glycan is linked to asparagine 1226. Residues 1263-1405 (CGGRALLTNV…WGFNASVGSA (143 aa)) enclose the CUB 2 domain. An N-linked (GlcNAc...) asparagine glycan is attached at asparagine 1271. Threonine 1353 bears the Phosphothreonine mark. Positions 1403–1445 (GSARCGSGGPGSCPVPQECVPQDGAAGAGLCRCPQGWAGPHCR) constitute an EGF-like 4 domain. 6 Kelch repeats span residues 1522–1570 (TLWM…SFHA), 1580–1629 (AMYL…TARR), 1632–1679 (SLLL…SAVY), 1685–1735 (SLYV…HASA), 1740–1787 (TMVV…ESVA), and 1796–1841 (RLYI…WCHG). PSI domains are found at residues 1820–1860 (PCRL…PPCS), 1868–1923 (ECRR…NDCR), 2004–2062 (PCHL…ESCS), and 2064–2121 (GCAQ…LSCP). Asparagine 2010 carries N-linked (GlcNAc...) asparagine glycosylation. An EGF-like 5 domain is found at 2122 to 2160 (PEDECANGHHDCNETQNCHDQPHGYECSCKTGYTMDNVT). 2 cysteine pairs are disulfide-bonded: cysteine 2126/cysteine 2139 and cysteine 2133/cysteine 2148. Residues asparagine 2158 and asparagine 2173 are each glycosylated (N-linked (GlcNAc...) asparagine). 8 disulfides stabilise this stretch: cysteine 2197/cysteine 2205, cysteine 2199/cysteine 2214, cysteine 2217/cysteine 2226, cysteine 2229/cysteine 2243, cysteine 2324/cysteine 2333, cysteine 2326/cysteine 2341, cysteine 2343/cysteine 2368, and cysteine 2371/cysteine 2385. Laminin EGF-like domains are found at residues 2197–2245 (CRCN…TCRP) and 2324–2387 (CQCN…QCYR). The interval 2468-2508 (VHIQPPPPPPPPPPPADGVPRVAADLGGLGTGSGSGSPVEP) is disordered. Positions 2471–2484 (QPPPPPPPPPPPAD) are enriched in pro residues. The helical transmembrane segment at 2592 to 2612 (LFVFFSVFFSCFFLFLSLCVL) threads the bilayer. Residues 2613–2789 (LWKAKQALDQ…SQDNLTSMSL (177 aa)) lie on the Cytoplasmic side of the membrane. Residues 2762 to 2776 (GGAGGSGHGGGGGRK) are compositionally biased toward gly residues. Residues 2762–2789 (GGAGGSGHGGGGGRKGLLSQDNLTSMSL) are disordered. The segment covering 2780 to 2789 (SQDNLTSMSL) has biased composition (polar residues).

Highest expression in brain, testis and kidney.

Its subcellular location is the membrane. In terms of biological role, acts as a negative regulator of hedgehog signaling. The protein is Multiple epidermal growth factor-like domains protein 8 (Megf8) of Mus musculus (Mouse).